The sequence spans 446 residues: NADH-ubiquinone oxidoreductase chain 4 (446 aa).

Helical transmembrane passes span 4–24, 28–48, 56–76, 88–105, 109–131, 141–161, 182–202, 218–238, 245–265, 272–292, 297–317, 330–350, 373–393, and 426–446; these read LILM…FWMV, LFVI…FVNI, VLSY…IVAS, LFLF…LTFS, LFMF…LGWG, VYLL…IFYL, LLYL…LVHL, ILAG…FSFL, YNYI…LVCL, ALIA…LMTL, LSGS…LFCL, LLIN…WFLL, IVSW…FSAA, and FLHW…LFWI.

Belongs to the complex I subunit 4 family.

The protein localises to the mitochondrion membrane. The catalysed reaction is a ubiquinone + NADH + 5 H(+)(in) = a ubiquinol + NAD(+) + 4 H(+)(out). Functionally, core subunit of the mitochondrial membrane respiratory chain NADH dehydrogenase (Complex I) that is believed to belong to the minimal assembly required for catalysis. Complex I functions in the transfer of electrons from NADH to the respiratory chain. The immediate electron acceptor for the enzyme is believed to be ubiquinone. This is NADH-ubiquinone oxidoreductase chain 4 (ND4) from Ceratitis capitata (Mediterranean fruit fly).